A 367-amino-acid chain; its full sequence is Ribosomal lysine N-methyltransferase 5 (367 aa).

S-adenosyl-L-methionine contacts are provided by residues tryptophan 110, 170–172 (GAG), aspartate 192, tryptophan 256, and methionine 288.

This sequence belongs to the class I-like SAM-binding methyltransferase superfamily. RKM5 family.

Its function is as follows. S-adenosyl-L-methionine-dependent protein-lysine N-methyltransferase that monomethylates 60S ribosomal protein L1 (RPL1A and RPL1B) at 'Lys-46'. This Saccharomyces cerevisiae (strain JAY291) (Baker's yeast) protein is Ribosomal lysine N-methyltransferase 5 (RKM5).